A 131-amino-acid chain; its full sequence is Large ribosomal subunit protein eL32 (131 aa).

It belongs to the eukaryotic ribosomal protein eL32 family. Component of the large ribosomal subunit. Mature ribosomes consist of a small (40S) and a large (60S) subunit. The 40S subunit contains about 32 different proteins and 1 molecule of RNA (18S). The 60S subunit contains 45 different proteins and 3 molecules of RNA (25S, 5.8S and 5S).

It is found in the cytoplasm. Its function is as follows. Component of the ribosome, a large ribonucleoprotein complex responsible for the synthesis of proteins in the cell. The small ribosomal subunit (SSU) binds messenger RNAs (mRNAs) and translates the encoded message by selecting cognate aminoacyl-transfer RNA (tRNA) molecules. The large subunit (LSU) contains the ribosomal catalytic site termed the peptidyl transferase center (PTC), which catalyzes the formation of peptide bonds, thereby polymerizing the amino acids delivered by tRNAs into a polypeptide chain. The nascent polypeptides leave the ribosome through a tunnel in the LSU and interact with protein factors that function in enzymatic processing, targeting, and the membrane insertion of nascent chains at the exit of the ribosomal tunnel. The chain is Large ribosomal subunit protein eL32 from Candida albicans (strain SC5314 / ATCC MYA-2876) (Yeast).